We begin with the raw amino-acid sequence, 274 residues long: Putative pyruvate, phosphate dikinase regulatory protein (274 aa).

Position 150–157 (150–157 (GPSRTSKT)) interacts with ADP.

It belongs to the pyruvate, phosphate/water dikinase regulatory protein family. PDRP subfamily.

It catalyses the reaction N(tele)-phospho-L-histidyl/L-threonyl-[pyruvate, phosphate dikinase] + ADP = N(tele)-phospho-L-histidyl/O-phospho-L-threonyl-[pyruvate, phosphate dikinase] + AMP + H(+). The catalysed reaction is N(tele)-phospho-L-histidyl/O-phospho-L-threonyl-[pyruvate, phosphate dikinase] + phosphate + H(+) = N(tele)-phospho-L-histidyl/L-threonyl-[pyruvate, phosphate dikinase] + diphosphate. Bifunctional serine/threonine kinase and phosphorylase involved in the regulation of the pyruvate, phosphate dikinase (PPDK) by catalyzing its phosphorylation/dephosphorylation. This is Putative pyruvate, phosphate dikinase regulatory protein from Rickettsia peacockii (strain Rustic).